We begin with the raw amino-acid sequence, 377 residues long: Geranylgeranyl transferase type-1 subunit beta (377 aa).

PFTB repeat units follow at residues 144–186 (KEAC…YMLN), 193–234 (MKKA…CLMG), 245–284 (LNRI…KLLK), and 291–333 (FEKN…SLME). Residues 219–221 (HGG) and 263–266 (RPNK) each bind geranylgeranyl diphosphate. Positions 269 and 271 each coordinate Zn(2+). A geranylgeranyl diphosphate-binding site is contributed by 272-275 (YSFW). Zn(2+) is bound at residue His-321.

It belongs to the protein prenyltransferase subunit beta family. Heterodimer of FNTA and PGGT1B. PGGT1B mediates interaction with substrate peptides. The cofactor is Zn(2+). It depends on Mg(2+) as a cofactor.

The enzyme catalyses geranylgeranyl diphosphate + L-cysteinyl-[protein] = S-geranylgeranyl-L-cysteinyl-[protein] + diphosphate. In terms of biological role, catalyzes the transfer of a geranyl-geranyl moiety from geranyl-geranyl pyrophosphate to a cysteine at the fourth position from the C-terminus of proteins having the C-terminal sequence Cys-aliphatic-aliphatic-X. Known substrates include RAC1, RAC2, RAP1A and RAP1B. The chain is Geranylgeranyl transferase type-1 subunit beta (PGGT1B) from Bos taurus (Bovine).